The primary structure comprises 118 residues: Large ribosomal subunit protein bL19 (118 aa).

It belongs to the bacterial ribosomal protein bL19 family.

Its function is as follows. This protein is located at the 30S-50S ribosomal subunit interface and may play a role in the structure and function of the aminoacyl-tRNA binding site. This is Large ribosomal subunit protein bL19 from Salinibacter ruber (strain DSM 13855 / M31).